Reading from the N-terminus, the 518-residue chain is Cytokinin hydroxylase (518 aa).

Residues 1–21 (MLLTILKSLLVIFVTTILRVL) traverse the membrane as a helical segment. Cys-464 is a binding site for heme.

The protein belongs to the cytochrome P450 family. Heme serves as cofactor. In terms of tissue distribution, expressed in roots and flowers.

The protein resides in the membrane. It carries out the reaction N(6)-(dimethylallyl)adenosine 5'-phosphate + NADPH + O2 + H(+) = 9-ribosyl-trans-zeatin 5'-phosphate + NADP(+) + H2O. The enzyme catalyses N(6)-(dimethylallyl)adenosine 5'-diphosphate + NADPH + O2 + H(+) = 9-ribosyl-trans-zeatin 5'-diphosphate + NADP(+) + H2O. It catalyses the reaction N(6)-(dimethylallyl)adenosine 5'-triphosphate + NADPH + O2 + H(+) = 9-ribosyl-trans-zeatin 5'-triphosphate + NADP(+) + H2O. Cytokinin hydroxylase that catalyzes the biosynthesis of trans-zeatin via the isopentenyladenine riboside 5'-monophosphate (iPRMP)-dependent pathway. Can use isopentenyladenosine-5'-monophosphate, isopentenyladenosine-5'-diphosphate and isopentenyladenosine-5'-triphosphate as substrate. The chain is Cytokinin hydroxylase (CYP735A1) from Arabidopsis thaliana (Mouse-ear cress).